A 111-amino-acid chain; its full sequence is DIVLTQSPASLAVSLGQRATISCRASKSVSTSGYSYMHWYQQKPGQPPKLLIYLASNLESGVPARFSGSGSGTDFTLNIHPVEEEDAATYYCQHSRELPLTFGAGTKLELK.

Residues 1 to 23 (DIVLTQSPASLAVSLGQRATISC) form a framework-1 region. Residues C23 and C92 are joined by a disulfide bond. The tract at residues 24-38 (RASKSVSTSGYSYMH) is complementarity-determining-1. The tract at residues 39 to 53 (WYQQKPGQPPKLLIY) is framework-2. The complementarity-determining-2 stretch occupies residues 54–60 (LASNLES). Residues 61–92 (GVPARFSGSGSGTDFTLNIHPVEEEDAATYYC) form a framework-3 region. The interval 93 to 101 (QHSRELPLT) is complementarity-determining-3. Residues 102-111 (FGAGTKLELK) are framework-4.

This Mus musculus (Mouse) protein is Ig kappa chain V-III region PC 7175.